The chain runs to 400 residues: Phosphoglycerate kinase (400 aa).

Residues 21–23 (DFN), R37, 60–63 (HLGR), R121, and R154 each bind substrate. Residues K204, E326, and 355 to 358 (GGDS) contribute to the ATP site.

This sequence belongs to the phosphoglycerate kinase family. As to quaternary structure, monomer.

It localises to the cytoplasm. It carries out the reaction (2R)-3-phosphoglycerate + ATP = (2R)-3-phospho-glyceroyl phosphate + ADP. It participates in carbohydrate degradation; glycolysis; pyruvate from D-glyceraldehyde 3-phosphate: step 2/5. This is Phosphoglycerate kinase from Chloroflexus aurantiacus (strain ATCC 29366 / DSM 635 / J-10-fl).